A 164-amino-acid polypeptide reads, in one-letter code: Cyclic pyranopterin monophosphate synthase (164 aa).

Residues 75–77 and 116–117 contribute to the substrate site; these read MCH and ME. Aspartate 131 is a catalytic residue.

The protein belongs to the MoaC family. In terms of assembly, homohexamer; trimer of dimers.

It carries out the reaction (8S)-3',8-cyclo-7,8-dihydroguanosine 5'-triphosphate = cyclic pyranopterin phosphate + diphosphate. Its pathway is cofactor biosynthesis; molybdopterin biosynthesis. In terms of biological role, catalyzes the conversion of (8S)-3',8-cyclo-7,8-dihydroguanosine 5'-triphosphate to cyclic pyranopterin monophosphate (cPMP). The polypeptide is Cyclic pyranopterin monophosphate synthase (Staphylococcus aureus (strain bovine RF122 / ET3-1)).